We begin with the raw amino-acid sequence, 250 residues long: 3-deoxy-manno-octulosonate cytidylyltransferase (250 aa).

This sequence belongs to the KdsB family.

The protein localises to the cytoplasm. It catalyses the reaction 3-deoxy-alpha-D-manno-oct-2-ulosonate + CTP = CMP-3-deoxy-beta-D-manno-octulosonate + diphosphate. It functions in the pathway nucleotide-sugar biosynthesis; CMP-3-deoxy-D-manno-octulosonate biosynthesis; CMP-3-deoxy-D-manno-octulosonate from 3-deoxy-D-manno-octulosonate and CTP: step 1/1. It participates in bacterial outer membrane biogenesis; lipopolysaccharide biosynthesis. Activates KDO (a required 8-carbon sugar) for incorporation into bacterial lipopolysaccharide in Gram-negative bacteria. The sequence is that of 3-deoxy-manno-octulosonate cytidylyltransferase from Bacteroides thetaiotaomicron (strain ATCC 29148 / DSM 2079 / JCM 5827 / CCUG 10774 / NCTC 10582 / VPI-5482 / E50).